Consider the following 325-residue polypeptide: Electron transfer flavoprotein subunit alpha (325 aa).

An FAD-binding site is contributed by 262–290 (LYIACGISGAIQHLAGMSNSKVIVAINKD).

The protein belongs to the ETF alpha-subunit/FixB family. Heterodimer of an alpha and a beta subunit. FAD serves as cofactor.

In terms of biological role, the electron transfer flavoprotein serves as a specific electron acceptor for other dehydrogenases. It transfers the electrons to the main respiratory chain via ETF-ubiquinone oxidoreductase (ETF dehydrogenase). The protein is Electron transfer flavoprotein subunit alpha (etfA) of Bacillus subtilis (strain 168).